We begin with the raw amino-acid sequence, 877 residues long: Polycomb protein Scm (877 aa).

A disordered region spans residues 1–57 (MSGGRDSSTSSGSNSAAPGASTNATSSASASASSTSTSASPGSTTSPASTQRQRGRP). The span at 7-50 (SSTSSGSNSAAPGASTNATSSASASASSTSTSASPGSTTSPAST) shows a compositional bias: low complexity. The FCS-type zinc finger occupies 54 to 93 (RGRPAKRATCTWCGEGKLPLQYVLPTQTGKKEFCSETCIA). 4 residues coordinate Zn(2+): cysteine 63, cysteine 66, cysteine 87, and cysteine 91. 2 MBT repeats span residues 175–273 (FDWD…LQPP) and 281–382 (SSWP…MQPP). Disordered stretches follow at residues 535–621 (NSRK…SNKV), 652–692 (TNTN…GGSA), and 713–735 (ANVK…ASLP). Position 546 is a phosphothreonine (threonine 546). 2 positions are modified to phosphoserine: serine 549 and serine 550. The segment covering 560-569 (QSNSATTSPS) has biased composition (polar residues). Position 585 is a phosphoserine (serine 585). Over residues 598 to 620 (ASQQNSNHSLNNNNNSASKSSNK) the composition is skewed to low complexity. The span at 724–735 (SPTTLSSSASLP) shows a compositional bias: low complexity. The SAM domain occupies 806–876 (WTIEEVIQYI…KVNGRRNNLA (71 aa)).

The protein belongs to the SCM family. As to quaternary structure, scm associates with the PRC1 core complex containing PSC, PC, PH and Sce/RING1. Forms homotypic and heterotypic interactions. Interacts with the SAM domain of ph-p via its SAM domain in vitro. Interacts with corto in vitro.

It is found in the nucleus. Polycomb group (PcG) protein. PcG proteins act by forming multiprotein complexes, which are required to maintain the transcriptionally repressive state of homeotic genes throughout development. PcG proteins are not required to initiate repression, but to maintain it during later stages of development. They probably act via the methylation of histones, rendering chromatin heritably changed in its expressibility. The protein is Polycomb protein Scm of Drosophila melanogaster (Fruit fly).